The chain runs to 318 residues: Methenyltetrahydromethanopterin cyclohydrolase (318 aa).

It belongs to the MCH family.

The protein resides in the cytoplasm. The enzyme catalyses 5,10-methenyl-5,6,7,8-tetrahydromethanopterin + H2O = N(5)-formyl-5,6,7,8-tetrahydromethanopterin + H(+). It participates in one-carbon metabolism; methanogenesis from CO(2); 5,10-methenyl-5,6,7,8-tetrahydromethanopterin from CO(2): step 3/3. Catalyzes the reversible interconversion of 5-formyl-H(4)MPT to methenyl-H(4)MPT(+). The protein is Methenyltetrahydromethanopterin cyclohydrolase of Methanocella arvoryzae (strain DSM 22066 / NBRC 105507 / MRE50).